A 375-amino-acid polypeptide reads, in one-letter code: Decapping and exoribonuclease protein Rai1 (375 aa).

Residues arginine 43 and leucine 120–glycine 122 each bind substrate. Glutamate 180, glutamate 222, aspartate 224, glutamate 247, and leucine 248 together coordinate Mg(2+). Position 222 (glutamate 222) interacts with substrate. Residues lysine 249 and glutamine 274 each contribute to the substrate site.

Belongs to the DXO/Dom3Z family. As to quaternary structure, interacts with Rat1. Mg(2+) is required as a cofactor.

It carries out the reaction a 5'-end triphospho-ribonucleoside in mRNA + H2O = a 5'-end phospho-ribonucleoside in mRNA + diphosphate + H(+). The enzyme catalyses a 5'-end NAD(+)-phospho-ribonucleoside in mRNA + H2O = a 5'-end phospho-ribonucleoside in mRNA + NAD(+) + H(+). It catalyses the reaction a 5'-end (N(7)-methyl 5'-triphosphoguanosine)-ribonucleoside-ribonucleotide in mRNA + H2O = a (N(7)-methyl 5'-triphosphoguanosine)-nucleoside + a 5'-end phospho-ribonucleoside in mRNA + H(+). In terms of biological role, decapping enzyme for NAD-capped RNAs: specifically hydrolyzes the nicotinamide adenine dinucleotide (NAD) cap from a subset of RNAs by removing the entire NAD moiety from the 5'-end of an NAD-capped RNA. The NAD-cap is present at the 5'-end of some RNAs and snoRNAs. In contrast to the canonical 5'-end N7 methylguanosine (m7G) cap, the NAD cap promotes mRNA decay. Also acts as a non-canonical decapping enzyme that removes the entire cap structure of m7G capped or incompletely capped RNAs and mediates their subsequent degradation. Specifically degrades pre-mRNAs with a defective 5'-end m7G cap and is part of a pre-mRNA capping quality control. Possesses 5'-pyrophosphohydrolase activity, hydrolyzing the 5'-end triphosphate to release pyrophosphates, and 5'-3' exonuclease activity. May be involved in RNA degradation in the nucleus. The chain is Decapping and exoribonuclease protein Rai1 from Drosophila melanogaster (Fruit fly).